The following is a 249-amino-acid chain: 5'-nucleotidase SurE (249 aa).

The a divalent metal cation site is built by Asp8, Asp9, Ser39, and Asn91.

The protein belongs to the SurE nucleotidase family. A divalent metal cation serves as cofactor.

It localises to the cytoplasm. The catalysed reaction is a ribonucleoside 5'-phosphate + H2O = a ribonucleoside + phosphate. Nucleotidase that shows phosphatase activity on nucleoside 5'-monophosphates. This Pseudomonas syringae pv. tomato (strain ATCC BAA-871 / DC3000) protein is 5'-nucleotidase SurE.